The primary structure comprises 509 residues: MTIHVKNNIHWVGQRDWEVRDFHGTEYKTLQGSSYNSYLIREEKTVLIDTVDHKFSREFVQNLMAEVDLNTIDYIVINHAEEDHAGALSELMARIPNTPIYCTYNAIDSITGHHHHPEWNFHTVKTGDTLDIGNGKQLIFIETPMLHWPDSMMTYMTEDAVLFSNDAFGQHYCDEHLFNDEVDQTELFEQCQRYFANILTPFSRLVTAKIHEVLGFNLPLSMVATSHGVVWRDDPAQIIHLYLKWADSYQEDRITLFYDTMSNNTRMMADAIAQGINDVDPGVAVKIYNVARHDKNEILTQVFRSKGVLVGSSTMNNVMMPKVAAMLEEITGLRFQNKKASAFGSYGWNGGAVDRVQTRLMDAGFETTLALKTKWRPDGSALEVCREHGREIARQWALHPLDNTPARRVISPVKPAATAPQVTTAAQPMSASAESACGCNEVAAPQSATQPTVQSESGCMQCSVCQWIYDPALGEPMQDVTPGTMWSDVPDSFLCPECGLGKDVFNPIR.

The interval 30–210 (LQGSSYNSYL…PFSRLVTAKI (181 aa)) is zinc metallo-hydrolase. Fe cation-binding residues include His79, Glu81, Asp83, His147, Asp166, and His227. Residues 254-393 (ITLFYDTMSN…VCREHGREIA (140 aa)) form the Flavodoxin-like domain. FMN is bound by residues 260 to 264 (TMSNN) and 342 to 369 (AFGS…ETTL). The Rubredoxin-like domain occupies 457–508 (SGCMQCSVCQWIYDPALGEPMQDVTPGTMWSDVPDSFLCPECGLGKDVFNPI). Residues Cys462, Cys465, Cys495, and Cys498 each coordinate Fe cation.

The protein in the N-terminal section; belongs to the zinc metallo-hydrolase group 3 family. As to quaternary structure, homotetramer. Fe cation is required as a cofactor. FMN serves as cofactor.

The protein localises to the cytoplasm. The protein operates within nitrogen metabolism; nitric oxide reduction. In terms of biological role, anaerobic nitric oxide reductase; uses NADH to detoxify nitric oxide (NO), protecting several 4Fe-4S NO-sensitive enzymes. Has at least 2 reductase partners, only one of which (NorW, flavorubredoxin reductase) has been identified. NO probably binds to the di-iron center; electrons enter from the NorW at rubredoxin and are transferred sequentially to the FMN center and the di-iron center. Also able to function as an aerobic oxygen reductase. This Pectobacterium atrosepticum (strain SCRI 1043 / ATCC BAA-672) (Erwinia carotovora subsp. atroseptica) protein is Anaerobic nitric oxide reductase flavorubredoxin.